We begin with the raw amino-acid sequence, 109 residues long: MNTIIPLLLLSLLITVYAYALEDGNKEEMQDIAESEFEASNEMLQLAHLLEADRAETEEDRNSRQKRCWGANVPCEDENSPCCPPLKCEKTFGYGWWYGSPFCVRSGSG.

Positions 1–18 are cleaved as a signal peptide; the sequence is MNTIIPLLLLSLLITVYA. Residues 19 to 67 constitute a propeptide that is removed on maturation; that stretch reads YALEDGNKEEMQDIAESEFEASNEMLQLAHLLEADRAETEEDRNSRQKR. 3 disulfide bridges follow: Cys68–Cys83, Cys75–Cys88, and Cys82–Cys103.

The protein belongs to the neurotoxin 14 (magi-1) family. 07 (Jztx-56) subfamily. In terms of tissue distribution, expressed by the venom gland.

Its subcellular location is the secreted. Its function is as follows. Probable ion channel inhibitor. In Chilobrachys guangxiensis (Chinese earth tiger tarantula), this protein is U26-theraphotoxin-Cg1b.